Consider the following 224-residue polypeptide: Deoxyribose-phosphate aldolase (224 aa).

Catalysis depends on aspartate 92, which acts as the Proton donor/acceptor. Lysine 154 (schiff-base intermediate with acetaldehyde) is an active-site residue. The Proton donor/acceptor role is filled by lysine 183.

It belongs to the DeoC/FbaB aldolase family. DeoC type 1 subfamily.

The protein resides in the cytoplasm. It carries out the reaction 2-deoxy-D-ribose 5-phosphate = D-glyceraldehyde 3-phosphate + acetaldehyde. It participates in carbohydrate degradation; 2-deoxy-D-ribose 1-phosphate degradation; D-glyceraldehyde 3-phosphate and acetaldehyde from 2-deoxy-alpha-D-ribose 1-phosphate: step 2/2. In terms of biological role, catalyzes a reversible aldol reaction between acetaldehyde and D-glyceraldehyde 3-phosphate to generate 2-deoxy-D-ribose 5-phosphate. The sequence is that of Deoxyribose-phosphate aldolase from Histophilus somni (strain 129Pt) (Haemophilus somnus).